We begin with the raw amino-acid sequence, 709 residues long: F-box only protein 40 (709 aa).

The TRAF-type zinc-finger motif lies at 53-112 (EHQLLCPLEQVPCLNSEYGCPLSMSRHKLAKHLQVCPASVVCCSMEWNRWPNVDSETTLH). The segment at 232 to 280 (TNSSASCESKNKNDSEKEQISSGHNMVEGEGAPKKKEPQENQKQQDVRT) is disordered. Composition is skewed to basic and acidic residues over residues 240 to 250 (SKNKNDSEKEQ) and 262 to 277 (GAPK…KQQD). The region spanning 570 to 624 (QNSLTSLPLEILKYIAGFLDSVSLAQLSQVSVLMRNICATLLQERGMVLLQWKKK) is the F-box domain.

As to quaternary structure, directly interacts with SKP1 and CUL1. Expressed only in heart and skeletal muscle.

It is found in the cytoplasm. Its function is as follows. Probable substrate-recognition component of the SCF (SKP1-CUL1-F-box protein)-type E3 ubiquitin ligase complex that may function in myogenesis. The protein is F-box only protein 40 (FBXO40) of Homo sapiens (Human).